The chain runs to 99 residues: Large ribosomal subunit protein bL21 (99 aa).

This sequence belongs to the bacterial ribosomal protein bL21 family. As to quaternary structure, part of the 50S ribosomal subunit. Contacts protein L20.

Its function is as follows. This protein binds to 23S rRNA in the presence of protein L20. In Mesomycoplasma hyopneumoniae (strain 232) (Mycoplasma hyopneumoniae), this protein is Large ribosomal subunit protein bL21.